A 207-amino-acid chain; its full sequence is Large ribosomal subunit protein uL4 (207 aa).

The disordered stretch occupies residues 50 to 76 (KTKTVSEVSGTTKKPFKQKGTGNARQG).

The protein belongs to the universal ribosomal protein uL4 family. In terms of assembly, part of the 50S ribosomal subunit.

Its function is as follows. One of the primary rRNA binding proteins, this protein initially binds near the 5'-end of the 23S rRNA. It is important during the early stages of 50S assembly. It makes multiple contacts with different domains of the 23S rRNA in the assembled 50S subunit and ribosome. Functionally, forms part of the polypeptide exit tunnel. This chain is Large ribosomal subunit protein uL4, found in Rickettsia typhi (strain ATCC VR-144 / Wilmington).